The chain runs to 1249 residues: DNA-directed RNA polymerase subunit beta (1249 aa).

Belongs to the RNA polymerase beta chain family. The RNAP catalytic core consists of 2 alpha, 1 beta, 1 beta' and 1 omega subunit. When a sigma factor is associated with the core the holoenzyme is formed, which can initiate transcription.

The catalysed reaction is RNA(n) + a ribonucleoside 5'-triphosphate = RNA(n+1) + diphosphate. In terms of biological role, DNA-dependent RNA polymerase catalyzes the transcription of DNA into RNA using the four ribonucleoside triphosphates as substrates. The polypeptide is DNA-directed RNA polymerase subunit beta (Clostridium botulinum (strain Eklund 17B / Type B)).